Here is a 162-residue protein sequence, read N- to C-terminus: Peptidyl-prolyl cis-trans isomerase (162 aa).

One can recognise a PPIase cyclophilin-type domain in the interval 5-161 (FFDVIANGQP…ARIVIDKCGT (157 aa)).

The protein belongs to the cyclophilin-type PPIase family. PPIase A subfamily.

It localises to the cytoplasm. It catalyses the reaction [protein]-peptidylproline (omega=180) = [protein]-peptidylproline (omega=0). Binds cyclosporin A (CsA). CsA mediates some of its effects via an inhibitory action on PPIase. Functionally, PPIases accelerate the folding of proteins. It catalyzes the cis-trans isomerization of proline imidic peptide bonds in oligopeptides. In Schizosaccharomyces pombe (strain 972 / ATCC 24843) (Fission yeast), this protein is Peptidyl-prolyl cis-trans isomerase (ppi1).